We begin with the raw amino-acid sequence, 809 residues long: Acyl-homoserine lactone acylase QuiP (809 aa).

The N-terminal stretch at 1 to 26 (MASPAFSHFLPRFGVAAAVASALSLA) is a signal peptide. Ser-261 (nucleophile) is an active-site residue.

It belongs to the peptidase S45 family. In terms of assembly, heterodimer of an alpha subunit and a beta subunit processed from the same precursor.

Its subcellular location is the periplasm. The catalysed reaction is an N-acyl-L-homoserine lactone + H2O = L-homoserine lactone + a carboxylate. In terms of biological role, catalyzes the deacylation of acyl-homoserine lactone (AHL or acyl-HSL), releasing homoserine lactone (HSL) and the corresponding fatty acid. Possesses a specificity for the degradation of long-chain acyl-HSLs (side chains of seven or more carbons in length). The sequence is that of Acyl-homoserine lactone acylase QuiP (quiP) from Pseudomonas fluorescens (strain ATCC BAA-477 / NRRL B-23932 / Pf-5).